A 390-amino-acid polypeptide reads, in one-letter code: D-alanyl-D-alanine carboxypeptidase DacD (390 aa).

The N-terminal stretch at 1-23 (MLLKRRLFIAASLFAMHLSPALA) is a signal peptide. The Acyl-ester intermediate role is filled by serine 65. Catalysis depends on lysine 68, which acts as the Proton acceptor. The active site involves serine 131. Lysine 234 contacts substrate.

The protein belongs to the peptidase S11 family.

The protein localises to the cell inner membrane. The enzyme catalyses Preferential cleavage: (Ac)2-L-Lys-D-Ala-|-D-Ala. Also transpeptidation of peptidyl-alanyl moieties that are N-acyl substituents of D-alanine.. It participates in cell wall biogenesis; peptidoglycan biosynthesis. In terms of biological role, removes C-terminal D-alanyl residues from sugar-peptide cell wall precursors. This Salmonella typhimurium (strain LT2 / SGSC1412 / ATCC 700720) protein is D-alanyl-D-alanine carboxypeptidase DacD (dacD).